The primary structure comprises 157 residues: Probable succinate transporter subunit YjjB (157 aa).

4 consecutive transmembrane segments (helical) span residues L8 to F28, M50 to V70, V87 to I107, and F129 to W149.

Belongs to the ThrE exporter (TC 2.A.79) family. As to quaternary structure, the transporter is composed of YjjB and YjjP.

The protein localises to the cell inner membrane. Involved in succinate export with YjjP. Both proteins are required for export. The chain is Probable succinate transporter subunit YjjB from Shigella flexneri serotype 5b (strain 8401).